Consider the following 459-residue polypeptide: tRNA(Ile2) 2-agmatinylcytidine synthetase TiaS (459 aa).

A DNA-binding region (OB) is located at residues 282–360 (VRVRVWVASI…TINLEKLHII (79 aa)).

The protein belongs to the TiaS family.

The protein localises to the cytoplasm. The enzyme catalyses cytidine(34) in tRNA(Ile2) + agmatine + ATP + H2O = 2-agmatinylcytidine(34) in tRNA(Ile2) + AMP + 2 phosphate + 2 H(+). Functionally, ATP-dependent agmatine transferase that catalyzes the formation of 2-agmatinylcytidine (agm2C) at the wobble position (C34) of tRNA(Ile2), converting the codon specificity from AUG to AUA. This chain is tRNA(Ile2) 2-agmatinylcytidine synthetase TiaS, found in Staphylothermus marinus (strain ATCC 43588 / DSM 3639 / JCM 9404 / F1).